The following is a 731-amino-acid chain: Dynein axonemal intermediate chain 7 (731 aa).

Disordered regions lie at residues 1–50 (MPPK…NERL) and 285–320 (QNTESSAAVHNGKMEGERDESESSKQVDECHSVRSE). Basic and acidic residues-rich tracts occupy residues 17-50 (KAEKERLQREEEEKRQREAEEARLIAEREENERL) and 296-320 (GKMEGERDESESSKQVDECHSVRSE).

It belongs to the DNAI7 family. In terms of assembly, part of the multisubunit axonemal dynein complex formed at least of two heavy chains and a number of intermediate and light chains.

The protein resides in the cell projection. Its subcellular location is the cilium. It is found in the cytoplasm. Its function is as follows. Via its association with the multisubunit axonemal dynein complex, may be potentially involved in the regulation of cilia function. This chain is Dynein axonemal intermediate chain 7 (dnai7), found in Danio rerio (Zebrafish).